We begin with the raw amino-acid sequence, 220 residues long: Claudin-3 (220 aa).

Over 1–8 (MSMGLEIT) the chain is Cytoplasmic. Residues 9-29 (GTALAVLGWLGTIVCCALPMW) form a helical membrane-spanning segment. At 30–80 (RVSAFIGSNIITSQNIWEGLWMNCVVQSTGQMQCKVYDSLLALPQDLQAAR) the chain is on the extracellular side. A helical transmembrane segment spans residues 81–101 (ALIVVAILLAAFGLLVALVGA). The Cytoplasmic segment spans residues 102-115 (QCTNCVQDDTAKAK). Residues 116–136 (ITIVAGVLFLLAALLTLVPVS) form a helical membrane-spanning segment. The Extracellular segment spans residues 137–159 (WSANTIIRDFYNPVVPEAQKREM). The helical transmembrane segment at 160 to 180 (GAGLYVGWAAAALQLLGGALL) threads the bilayer. Residues 181-220 (CCSCPPREKKYTATKVVYSAPRSTGPGASLGTGYDRKDYV) lie on the Cytoplasmic side of the membrane. Y198 is modified (phosphotyrosine). A phosphoserine mark is found at S199 and S209. The interactions with TJP1, TJP2 and TJP3 stretch occupies residues 219–220 (YV).

Belongs to the claudin family. Can form homo- and heteropolymers with other CLDN. Homopolymers interact with CLDN1 and CLDN2 homopolymers. Interacts in cis (within the same plasma membrane) with CLDN19. Directly interacts with TJP1/ZO-1, TJP2/ZO-2 and TJP3/ZO-3.

It is found in the cell junction. Its subcellular location is the tight junction. It localises to the cell membrane. Functionally, barrier-forming claudin. Plays a major role in tight junction-specific obliteration of the intercellular space, through calcium-independent cell-adhesion activity. This Homo sapiens (Human) protein is Claudin-3 (CLDN3).